We begin with the raw amino-acid sequence, 561 residues long: Carbohydrate sulfotransferase 15 (561 aa).

Over 1 to 80 (MRHCINCCIQ…FLRFRKGKRC (80 aa)) the chain is Cytoplasmic. The chain crosses the membrane as a helical; Signal-anchor for type II membrane protein span at residues 81–101 (SLVFGLIIMTLVMASYILSGA). At 102-561 (HQELLISSPF…DDEAFAWKTT (460 aa)) the chain is on the lumenal side. Residue 263–267 (KCGTT) participates in 3'-phosphoadenylyl sulfate binding. An N-linked (GlcNAc...) asparagine glycan is attached at Asn-364. 2 residues coordinate 3'-phosphoadenylyl sulfate: Arg-392 and Ser-400.

Belongs to the sulfotransferase 1 family. In terms of assembly, homodimer; disulfide-linked (Potential). The relevance of homodimerization is however unsure. May interact with phosphorylated proteins in resting B-cells, including HCK. A divalent metal cation is required as a cofactor. The cofactor is glutathione. Post-translationally, glycosylated.

Its subcellular location is the golgi apparatus membrane. The enzyme catalyses dermatan 4'-sulfate + n 3'-phosphoadenylyl sulfate = dermatan 4',6'-bissulfate + n adenosine 3',5'-bisphosphate + n H(+). It carries out the reaction chondroitin 4'-sulfate + n 3'-phosphoadenylyl sulfate = chondroitin 4',6'-bissulfate + n adenosine 3',5'-bisphosphate + n H(+). Its activity is regulated as follows. Inhibited by phenyl beta-GalNAc(4,6-SO(4)). In terms of biological role, sulfotransferase that transfers sulfate from 3'-phosphoadenosine 5'-phosphosulfate (PAPS) to the C-6 hydroxyl group of the GalNAc 4-sulfate residue of chondroitin sulfate A and forms chondroitin sulfate E containing GlcA-GalNAc(4,6-SO(4)) repeating units. It also transfers sulfate to a unique non-reducing terminal sequence, GalNAc(4SO4)-GlcA(2SO4)-GalNAc(6SO4), to yield a highly sulfated structure similar to the structure found in thrombomodulin chondroitin sulfate. May also act as a B-cell receptor involved in BCR ligation-mediated early activation that mediate regulatory signals key to B-cell development and/or regulation of B-cell-specific RAG expression; however such results are unclear in vivo. This chain is Carbohydrate sulfotransferase 15 (Chst15), found in Rattus norvegicus (Rat).